A 168-amino-acid polypeptide reads, in one-letter code: Dihydrofolate reductase (168 aa).

Positions 1–164 (MIIGIWAEDE…YTFTIKKYEK (164 aa)) constitute a DHFR domain. 5–7 (IWA) lines the substrate pocket. NADP(+)-binding positions include 6–7 (WA) and 14–19 (IGEADK). Glu-27 serves as a coordination point for substrate. 43–46 (GRKT) lines the NADP(+) pocket. Arg-58 contacts substrate. NADP(+)-binding positions include 63–66 (LTRD) and 99–104 (TGGAEI). A substrate-binding site is contributed by Thr-118.

Belongs to the dihydrofolate reductase family.

The catalysed reaction is (6S)-5,6,7,8-tetrahydrofolate + NADP(+) = 7,8-dihydrofolate + NADPH + H(+). It functions in the pathway cofactor biosynthesis; tetrahydrofolate biosynthesis; 5,6,7,8-tetrahydrofolate from 7,8-dihydrofolate: step 1/1. Its function is as follows. Key enzyme in folate metabolism. Catalyzes an essential reaction for de novo glycine and purine synthesis, and for DNA precursor synthesis. The protein is Dihydrofolate reductase (folA) of Lactococcus lactis subsp. lactis (strain IL1403) (Streptococcus lactis).